Reading from the N-terminus, the 523-residue chain is 2-isopropylmalate synthase (523 aa).

The Pyruvate carboxyltransferase domain occupies 5-267 (VIIFDTTLRD…HTAINHQEIW (263 aa)). Mn(2+) is bound by residues D14, H202, H204, and N238. Residues 392–523 (RLDYFSVQSG…QHNENNKETV (132 aa)) are regulatory domain.

This sequence belongs to the alpha-IPM synthase/homocitrate synthase family. LeuA type 1 subfamily. Homodimer. Mn(2+) is required as a cofactor.

It localises to the cytoplasm. It carries out the reaction 3-methyl-2-oxobutanoate + acetyl-CoA + H2O = (2S)-2-isopropylmalate + CoA + H(+). It functions in the pathway amino-acid biosynthesis; L-leucine biosynthesis; L-leucine from 3-methyl-2-oxobutanoate: step 1/4. Its function is as follows. Catalyzes the condensation of the acetyl group of acetyl-CoA with 3-methyl-2-oxobutanoate (2-ketoisovalerate) to form 3-carboxy-3-hydroxy-4-methylpentanoate (2-isopropylmalate). The sequence is that of 2-isopropylmalate synthase from Escherichia coli O81 (strain ED1a).